The following is a 72-amino-acid chain: Translation initiation factor IF-1 (72 aa).

In terms of domain architecture, S1-like spans 1-72 (MAKEDSIEME…SKGRIVYRAR (72 aa)).

Belongs to the IF-1 family. In terms of assembly, component of the 30S ribosomal translation pre-initiation complex which assembles on the 30S ribosome in the order IF-2 and IF-3, IF-1 and N-formylmethionyl-tRNA(fMet); mRNA recruitment can occur at any time during PIC assembly.

The protein localises to the cytoplasm. Its function is as follows. One of the essential components for the initiation of protein synthesis. Stabilizes the binding of IF-2 and IF-3 on the 30S subunit to which N-formylmethionyl-tRNA(fMet) subsequently binds. Helps modulate mRNA selection, yielding the 30S pre-initiation complex (PIC). Upon addition of the 50S ribosomal subunit IF-1, IF-2 and IF-3 are released leaving the mature 70S translation initiation complex. This chain is Translation initiation factor IF-1, found in Nitrosococcus oceani (strain ATCC 19707 / BCRC 17464 / JCM 30415 / NCIMB 11848 / C-107).